Consider the following 116-residue polypeptide: Putative membrane protein insertion efficiency factor (116 aa).

Belongs to the UPF0161 family.

It is found in the cell inner membrane. Its function is as follows. Could be involved in insertion of integral membrane proteins into the membrane. This is Putative membrane protein insertion efficiency factor from Bartonella tribocorum (strain CIP 105476 / IBS 506).